The sequence spans 165 residues: Large ribosomal subunit protein uL10 (165 aa).

It belongs to the universal ribosomal protein uL10 family. In terms of assembly, part of the ribosomal stalk of the 50S ribosomal subunit. The N-terminus interacts with L11 and the large rRNA to form the base of the stalk. The C-terminus forms an elongated spine to which L12 dimers bind in a sequential fashion forming a multimeric L10(L12)X complex.

Its function is as follows. Forms part of the ribosomal stalk, playing a central role in the interaction of the ribosome with GTP-bound translation factors. The chain is Large ribosomal subunit protein uL10 from Burkholderia multivorans (strain ATCC 17616 / 249).